An 875-amino-acid chain; its full sequence is Alanine--tRNA ligase (875 aa).

The interval glutamate 426–aspartate 445 is disordered. Zn(2+) is bound by residues histidine 561, histidine 565, cysteine 663, and histidine 667.

It belongs to the class-II aminoacyl-tRNA synthetase family. Requires Zn(2+) as cofactor.

Its subcellular location is the cytoplasm. The catalysed reaction is tRNA(Ala) + L-alanine + ATP = L-alanyl-tRNA(Ala) + AMP + diphosphate. In terms of biological role, catalyzes the attachment of alanine to tRNA(Ala) in a two-step reaction: alanine is first activated by ATP to form Ala-AMP and then transferred to the acceptor end of tRNA(Ala). Also edits incorrectly charged Ser-tRNA(Ala) and Gly-tRNA(Ala) via its editing domain. The chain is Alanine--tRNA ligase from Chlamydia muridarum (strain MoPn / Nigg).